The following is a 327-amino-acid chain: Methionyl-tRNA formyltransferase (327 aa).

121–124 is a (6S)-5,6,7,8-tetrahydrofolate binding site; that stretch reads SLLP.

It belongs to the Fmt family.

It catalyses the reaction L-methionyl-tRNA(fMet) + (6R)-10-formyltetrahydrofolate = N-formyl-L-methionyl-tRNA(fMet) + (6S)-5,6,7,8-tetrahydrofolate + H(+). Functionally, attaches a formyl group to the free amino group of methionyl-tRNA(fMet). The formyl group appears to play a dual role in the initiator identity of N-formylmethionyl-tRNA by promoting its recognition by IF2 and preventing the misappropriation of this tRNA by the elongation apparatus. In Burkholderia ambifaria (strain ATCC BAA-244 / DSM 16087 / CCUG 44356 / LMG 19182 / AMMD) (Burkholderia cepacia (strain AMMD)), this protein is Methionyl-tRNA formyltransferase.